Reading from the N-terminus, the 392-residue chain is Succinyl-diaminopimelate desuccinylase (392 aa).

H76 serves as a coordination point for Zn(2+). The active site involves D78. Position 107 (D107) interacts with Zn(2+). Catalysis depends on E143, which acts as the Proton acceptor. Zn(2+) is bound by residues E144, E172, and H357.

Belongs to the peptidase M20A family. DapE subfamily. As to quaternary structure, homodimer. Zn(2+) serves as cofactor. The cofactor is Co(2+).

It catalyses the reaction N-succinyl-(2S,6S)-2,6-diaminopimelate + H2O = (2S,6S)-2,6-diaminopimelate + succinate. It functions in the pathway amino-acid biosynthesis; L-lysine biosynthesis via DAP pathway; LL-2,6-diaminopimelate from (S)-tetrahydrodipicolinate (succinylase route): step 3/3. Functionally, catalyzes the hydrolysis of N-succinyl-L,L-diaminopimelic acid (SDAP), forming succinate and LL-2,6-diaminopimelate (DAP), an intermediate involved in the bacterial biosynthesis of lysine and meso-diaminopimelic acid, an essential component of bacterial cell walls. The chain is Succinyl-diaminopimelate desuccinylase from Helicobacter hepaticus (strain ATCC 51449 / 3B1).